The following is a 137-amino-acid chain: Large ribosomal subunit protein uL16 (137 aa).

It belongs to the universal ribosomal protein uL16 family. As to quaternary structure, part of the 50S ribosomal subunit.

Its function is as follows. Binds 23S rRNA and is also seen to make contacts with the A and possibly P site tRNAs. This chain is Large ribosomal subunit protein uL16, found in Rhodopseudomonas palustris (strain BisB5).